The primary structure comprises 187 residues: Homeobox protein engrailed-like ceh-16 (187 aa).

Disordered regions lie at residues 14 to 43 (PYPCPSPTISTPATSPSSISPTFASPNGTP), 60 to 100 (SDRP…DQLD), and 144 to 167 (KSTSSVPRDRCSSVTPNPHNHPSI). The span at 20–39 (PTISTPATSPSSISPTFASP) shows a compositional bias: low complexity. Residues 87-146 (EKRPRTAFTGDQLDRLKTEFRESRYLTEKRRQELAHELGLNESQIKIWFQNKRAKLKKST) constitute a DNA-binding region (homeobox). Positions 145-163 (STSSVPRDRCSSVTPNPHN) are enriched in polar residues.

The protein belongs to the engrailed homeobox family. In terms of tissue distribution, expressed in seam cells.

It localises to the nucleus. Its subcellular location is the cytoplasm. Functionally, transcriptional regulator which binds to DNA to regulate gene expression and promote seam cell development and differentiation during embryogenesis. Plays a role in maintaining the boundaries between the lateral rows of seam cells and the ventral and dorsal row of epidermal cells during embryonic development. Negatively regulates the expression of the fusion effector protein eff-1 to prevent seam cell fusion with the dorsal and ventral epidermal cells during embryonic elongation. Positively regulates seam cell self-renewal and expansion during the L2 larval stage to promote seam cell development. This role does not seem to be via regulation of eff-1 expression. Specifically, it is required for the asymmetric division of the V5.p seam cell during the L2 larval stage, and in turn the asymmetric nuclear distribution of pop-1 in V5.p daughter cells. The chain is Homeobox protein engrailed-like ceh-16 from Caenorhabditis elegans.